The sequence spans 265 residues: MAASVAPGVRTLWWAGAAWLRQGGIRELFRPRIEGSTPGRDFSLSHYQSTVIVERWWKVPLAGEGRKPHLHRRHRVYKLVEDTKHRPKDNLELILTQSVDEIGVRGDLVSVKKSVGRNKLLSQGLAVYASPENRKLFEEEKSLRREGKLEKIQTKAGEATVKFLRSCHLEVGMKNNVKWELNPEIVARHFFKNLGVVVAPHALRLPEEPITRWGEYWCDVTVNGLDTVRVPMSVVLFQKPKTKRYKHWLAQQAAKSVAPTNPQAV.

A mitochondrion-targeting transit peptide spans methionine 1 to serine 49.

It belongs to the bacterial ribosomal protein bL9 family. Component of the mitochondrial ribosome large subunit (39S) which comprises a 16S rRNA and about 50 distinct proteins.

The protein localises to the mitochondrion. This is Large ribosomal subunit protein bL9m (Mrpl9) from Mus musculus (Mouse).